A 120-amino-acid polypeptide reads, in one-letter code: Large ribosomal subunit protein bL20 (120 aa).

This sequence belongs to the bacterial ribosomal protein bL20 family.

Functionally, binds directly to 23S ribosomal RNA and is necessary for the in vitro assembly process of the 50S ribosomal subunit. It is not involved in the protein synthesizing functions of that subunit. The polypeptide is Large ribosomal subunit protein bL20 (Desulforudis audaxviator (strain MP104C)).